The primary structure comprises 506 residues: Sucrose transport protein SUT3 (506 aa).

Residues 1–20 are Cytoplasmic-facing; that stretch reads MAVDMELDGGGDGKGKAPPQ. Residues 21–41 traverse the membrane as a helical segment; the sequence is ISLSGLFLACMVAGGVQYGWA. Residues 42–54 are Extracellular-facing; the sequence is LQLSLLTPYIQTL. The helical transmembrane segment at 55-75 threads the bilayer; it reads GIPHALTSVMWLCGPIAGLIV. The Cytoplasmic portion of the chain corresponds to 76–94; the sequence is QPCVGLYSDKCTSSLGRRR. The helical transmembrane segment at 95–115 threads the bilayer; that stretch reads PFILTGCIIICISVIVIGFSS. The Extracellular segment spans residues 116–135; sequence DIGYALGDATEDCKVYRGPR. A helical membrane pass occupies residues 136–156; sequence YHAAAAFILGFWLLDFSNNTV. The Cytoplasmic segment spans residues 157–171; it reads QGPARALMADLSGRH. The helical transmembrane segment at 172-192 threads the bilayer; sequence GPSAANAIFCSWMALGNILGY. Over 193–220 the chain is Extracellular; that stretch reads SSGSTNDWHKWFPFLMTRACCEACANLK. The chain crosses the membrane as a helical span at residues 221–241; it reads AAFLVAVVFLGLSTAVTMVFA. The Cytoplasmic portion of the chain corresponds to 242-275; the sequence is REVALDPVAAAKRNEGEASGPLAVFKGMKNLPVG. The chain crosses the membrane as a helical span at residues 276-296; it reads MPSVLIVTGLTWLSWFPFILF. At 297-327 the chain is on the extracellular side; the sequence is DTDWMGREIYHGRPDGSPAEVTAFQEGVRQG. Residues 328–348 traverse the membrane as a helical segment; it reads AFGLLLNSIVLGISSFLIEPM. Residues 349 to 355 lie on the Cytoplasmic side of the membrane; sequence CRRLGAR. The chain crosses the membrane as a helical span at residues 356–376; that stretch reads AVWVMSSAVVCVAMAAVSVLS. The Extracellular portion of the chain corresponds to 377–404; it reads AWSLGDFGGSVQDAARAPAEEGGVRASA. A helical transmembrane segment spans residues 405 to 425; that stretch reads LALFVFLGLPFAVLCSVPFAV. The Cytoplasmic segment spans residues 426–441; that stretch reads TAQLTASRGGGQGLCT. The chain crosses the membrane as a helical span at residues 442–462; sequence GVLNISIVVPQMAIALGAGPW. The Extracellular portion of the chain corresponds to 463–470; it reads DELFGEGN. A helical transmembrane segment spans residues 471–491; that stretch reads IPAFAMASVFAAAAAAAGVVL. Over 492 to 506 the chain is Cytoplasmic; the sequence is LPKVSVRSVSMAGGH.

This sequence belongs to the glycoside-pentoside-hexuronide (GPH) cation symporter transporter (TC 2.A.2.4) family. Homodimer.

Its subcellular location is the cell membrane. Its pathway is glycan biosynthesis; sucrose metabolism. Functionally, responsible for the transport of sucrose into the cell, with the concomitant uptake of protons (symport system). May also transport other glucosides. The sequence is that of Sucrose transport protein SUT3 (SUT3) from Oryza sativa subsp. indica (Rice).